A 329-amino-acid chain; its full sequence is LGINGKVLRIFDKRTQQKFALKMLQDCPKARREVELHWRASQCPHIVDIVDVYENLYAGRKCLLIVMECLDGGELFSRIQDRGDQAFTEREASEIMKSIGEAIQYLHSINIAHRDVKPENLLYTSKRPNAILKLTDFGFAKETTSHNSLTTPCYTPYYVAPEVLGPEKYDKSCDMWSLGVIMYILLCGYPPFYSNHGLAISPGMKTRIRMGQYEFPNPEWSEVSEEVKMLIRNLLKTEPTQRMTITEFMNHPWIMQSTKVPQTPLHTSRVLKEDKERWEDVKEEMTSALATMRVDYEQIKIKKIEDASNPLLLKRRKKARAVEAAALAH.

ATP-binding positions include 1 to 7 and Lys22; that span reads LGINGKV. Residues 1–254 form the Protein kinase domain; it reads LGINGKVLRI…ITEFMNHPWI (254 aa). A staurosporine-binding site is contributed by 68–70; that stretch reads ECL. The active-site Proton acceptor is Asp115. Thr151 bears the Phosphothreonine; by MAPK14 mark. Ser201 is modified (phosphoserine; by MAPK14). At Ser257 the chain carries Phosphoserine; by autocatalysis. The tract at residues 257 to 293 is autoinhibitory helix; the sequence is STKVPQTPLHTSRVLKEDKERWEDVKEEMTSALATMR. Thr263 is subject to Phosphothreonine; by MAPK14. Residue Lys282 forms a Glycyl lysine isopeptide (Lys-Gly) (interchain with G-Cter in SUMO) linkage. The Nuclear export signal (NES) signature appears at 285 to 294; that stretch reads MTSALATMRV. The segment at 295–319 is p38 MAPK-binding site; it reads DYEQIKIKKIEDASNPLLLKRRKKA. 2 consecutive short sequence motifs (bipartite nuclear localization signal) follow at residues 300 to 303 and 314 to 318; these read KIKK and KRRKK.

The protein belongs to the protein kinase superfamily. CAMK Ser/Thr protein kinase family. As to quaternary structure, heterodimer with p38-alpha/MAPK14; this heterodimer forms a stable complex: molecules are positioned 'face to face' so that the ATP-binding sites of both kinases are at the heterodimer interface. Interacts with PHC2. Interacts with HSF1. In terms of processing, sumoylation inhibits the protein kinase activity. Post-translationally, phosphorylated and activated by MAP kinase p38-alpha/MAPK14 at Thr-151, Ser-201 and Thr-263.

The protein resides in the cytoplasm. It is found in the nucleus. The enzyme catalyses L-seryl-[protein] + ATP = O-phospho-L-seryl-[protein] + ADP + H(+). It catalyses the reaction L-threonyl-[protein] + ATP = O-phospho-L-threonyl-[protein] + ADP + H(+). With respect to regulation, activated following phosphorylation by p38-alpha/MAPK14 following various stresses. Inhibited following sumoylation. Specifically inhibited by pyrrolopyridine inhibitors. Functionally, stress-activated serine/threonine-protein kinase involved in cytokine production, endocytosis, reorganization of the cytoskeleton, cell migration, cell cycle control, chromatin remodeling, DNA damage response and transcriptional regulation. Following stress, it is phosphorylated and activated by MAP kinase p38-alpha/MAPK14, leading to phosphorylation of substrates. Phosphorylates serine in the peptide sequence, Hyd-X-R-X(2)-S, where Hyd is a large hydrophobic residue. Phosphorylates ALOX5, CDC25B, CDC25C, CEP131, ELAVL1, HNRNPA0, HSP27/HSPB1, KRT18, KRT20, LIMK1, LSP1, PABPC1, PARN, PDE4A, RCSD1, RPS6KA3, TAB3 and TTP/ZFP36. Phosphorylates HSF1; leading to the interaction with HSP90 proteins and inhibiting HSF1 homotrimerization, DNA-binding and transactivation activities. Mediates phosphorylation of HSP27/HSPB1 in response to stress, leading to the dissociation of HSP27/HSPB1 from large small heat-shock protein (sHsps) oligomers and impairment of their chaperone activities and ability to protect against oxidative stress effectively. Involved in inflammatory response by regulating tumor necrosis factor (TNF) and IL6 production post-transcriptionally: acts by phosphorylating AU-rich elements (AREs)-binding proteins ELAVL1, HNRNPA0, PABPC1 and TTP/ZFP36, leading to regulation of the stability and translation of TNF and IL6 mRNAs. Phosphorylation of TTP/ZFP36, a major post-transcriptional regulator of TNF, promotes its binding to 14-3-3 proteins and reduces its ARE mRNA affinity, leading to inhibition of dependent degradation of ARE-containing transcripts. Phosphorylates CEP131 in response to cellular stress following ultraviolet irradiation which promotes binding of CEP131 to 14-3-3 proteins and inhibits formation of novel centriolar satellites. Also involved in late G2/M checkpoint following DNA damage through a process of post-transcriptional mRNA stabilization: following DNA damage, relocalizes from nucleus to cytoplasm and phosphorylates HNRNPA0 and PARN, leading to stabilization of GADD45A mRNA. Involved in toll-like receptor signaling pathway (TLR) in dendritic cells: required for acute TLR-induced macropinocytosis by phosphorylating and activating RPS6KA3. This Cricetulus longicaudatus (Long-tailed dwarf hamster) protein is MAP kinase-activated protein kinase 2 (MAPKAPK2).